Here is a 231-residue protein sequence, read N- to C-terminus: ATP-dependent dethiobiotin synthetase BioD (231 aa).

12–17 (EVGKTV) provides a ligand contact to ATP. Threonine 16 provides a ligand contact to Mg(2+). Residue lysine 37 is part of the active site. Serine 41 is a substrate binding site. ATP is bound by residues aspartate 51, 112–115 (EGAG), and 202–204 (PKL). Mg(2+) contacts are provided by aspartate 51 and glutamate 112.

The protein belongs to the dethiobiotin synthetase family. As to quaternary structure, homodimer. Mg(2+) serves as cofactor.

Its subcellular location is the cytoplasm. It carries out the reaction (7R,8S)-7,8-diammoniononanoate + CO2 + ATP = (4R,5S)-dethiobiotin + ADP + phosphate + 3 H(+). It functions in the pathway cofactor biosynthesis; biotin biosynthesis; biotin from 7,8-diaminononanoate: step 1/2. Its function is as follows. Catalyzes a mechanistically unusual reaction, the ATP-dependent insertion of CO2 between the N7 and N8 nitrogen atoms of 7,8-diaminopelargonic acid (DAPA, also called 7,8-diammoniononanoate) to form a ureido ring. The chain is ATP-dependent dethiobiotin synthetase BioD from Bacillus subtilis subsp. natto.